Here is a 134-residue protein sequence, read N- to C-terminus: Peptide methionine sulfoxide reductase MsrB (134 aa).

A MsrB domain is found at 9 to 131 (DEYWRDKLDA…NSASIQLQKE (123 aa)). 4 residues coordinate Zn(2+): Cys48, Cys51, Cys97, and Cys100. Cys120 (nucleophile) is an active-site residue.

This sequence belongs to the MsrB Met sulfoxide reductase family. Requires Zn(2+) as cofactor.

It catalyses the reaction L-methionyl-[protein] + [thioredoxin]-disulfide + H2O = L-methionyl-(R)-S-oxide-[protein] + [thioredoxin]-dithiol. In Saccharophagus degradans (strain 2-40 / ATCC 43961 / DSM 17024), this protein is Peptide methionine sulfoxide reductase MsrB.